A 324-amino-acid polypeptide reads, in one-letter code: tRNA dimethylallyltransferase (324 aa).

20–27 (GPTASGKS) provides a ligand contact to ATP. 22 to 27 (TASGKS) contributes to the substrate binding site. 3 interaction with substrate tRNA regions span residues 45 to 48 (DSAL), 168 to 172 (QRLIR), and 284 to 291 (KRQITWLR).

Belongs to the IPP transferase family. As to quaternary structure, monomer. Mg(2+) serves as cofactor.

The enzyme catalyses adenosine(37) in tRNA + dimethylallyl diphosphate = N(6)-dimethylallyladenosine(37) in tRNA + diphosphate. Functionally, catalyzes the transfer of a dimethylallyl group onto the adenine at position 37 in tRNAs that read codons beginning with uridine, leading to the formation of N6-(dimethylallyl)adenosine (i(6)A). This chain is tRNA dimethylallyltransferase, found in Hydrogenovibrio crunogenus (strain DSM 25203 / XCL-2) (Thiomicrospira crunogena).